Reading from the N-terminus, the 395-residue chain is LIM/homeobox protein Lhx3 (395 aa).

LIM zinc-binding domains follow at residues 28–78 and 87–141; these read CAGC…CKDD and CAAC…CKAD. A DNA-binding region (homeobox) is located at residues 154 to 213; that stretch reads AKRPRTTITAKQLETLKNAYNNSPKPARHVREQLSSETGLDMRVVQVWFQNRRAKEKRLK. Disordered stretches follow at residues 208–304 and 363–383; these read KEKR…QDQY and GPSS…PVSP. A compositionally biased stretch (polar residues) spans 257–278; the sequence is DEPSMSEMNHSNGIYNSLNDSS.

As to quaternary structure, interacts with ldb1 and with the N-terminus of rnf12. In dorsal regions at neural tube and tailbud stages and in adults predominantly in the pituitary gland and weakly in the eye and brain.

The protein resides in the nucleus. Transcription factor. May be involved in the specification and maintenance of differentiation of distinct neuronal and neuroendocrine tissues. Early marker for the pituitary and pineal lineages, it may be involved in specifying these lineages. This chain is LIM/homeobox protein Lhx3 (lhx3), found in Xenopus laevis (African clawed frog).